A 342-amino-acid polypeptide reads, in one-letter code: L-threonine 3-dehydrogenase (342 aa).

Cys-39 is a binding site for Zn(2+). Active-site charge relay system residues include Thr-41 and His-44. Residues His-64, Glu-65, Cys-94, Cys-97, Cys-100, and Cys-108 each contribute to the Zn(2+) site. NAD(+) contacts are provided by residues Ile-176, Asp-196, Arg-201, 263–265 (LGI), and 287–288 (IY).

It belongs to the zinc-containing alcohol dehydrogenase family. Homotetramer. The cofactor is Zn(2+).

It localises to the cytoplasm. It carries out the reaction L-threonine + NAD(+) = (2S)-2-amino-3-oxobutanoate + NADH + H(+). Its pathway is amino-acid degradation; L-threonine degradation via oxydo-reductase pathway; glycine from L-threonine: step 1/2. Catalyzes the NAD(+)-dependent oxidation of L-threonine to 2-amino-3-ketobutyrate. In Protochlamydia amoebophila (strain UWE25), this protein is L-threonine 3-dehydrogenase.